The primary structure comprises 242 residues: Myogenic factor 6 (242 aa).

Residues 30-63 (GSPLYPGSDGTLSPCQDQLPPEAGSDSSGEEHVL) are disordered. In terms of domain architecture, bHLH spans 93–144 (DRRKAATLRERRRLKKINEAFEALKRRTVANPNQRLPKVEILRSAISYIERL). Residues 190–210 (ASDHSRALGGSPKAGGSMVES) form a disordered region.

In terms of assembly, efficient DNA binding requires dimerization with another bHLH protein. Skeletal muscle.

Its subcellular location is the nucleus. Its function is as follows. Involved in muscle differentiation (myogenic factor). Induces fibroblasts to differentiate into myoblasts. Probable sequence specific DNA-binding protein. The polypeptide is Myogenic factor 6 (MYF6) (Gallus gallus (Chicken)).